We begin with the raw amino-acid sequence, 173 residues long: Crossover junction endodeoxyribonuclease RuvC (173 aa).

Residues aspartate 8, glutamate 67, and aspartate 139 contribute to the active site. 3 residues coordinate Mg(2+): aspartate 8, glutamate 67, and aspartate 139.

It belongs to the RuvC family. In terms of assembly, homodimer which binds Holliday junction (HJ) DNA. The HJ becomes 2-fold symmetrical on binding to RuvC with unstacked arms; it has a different conformation from HJ DNA in complex with RuvA. In the full resolvosome a probable DNA-RuvA(4)-RuvB(12)-RuvC(2) complex forms which resolves the HJ. Mg(2+) serves as cofactor.

The protein localises to the cytoplasm. The catalysed reaction is Endonucleolytic cleavage at a junction such as a reciprocal single-stranded crossover between two homologous DNA duplexes (Holliday junction).. The RuvA-RuvB-RuvC complex processes Holliday junction (HJ) DNA during genetic recombination and DNA repair. Endonuclease that resolves HJ intermediates. Cleaves cruciform DNA by making single-stranded nicks across the HJ at symmetrical positions within the homologous arms, yielding a 5'-phosphate and a 3'-hydroxyl group; requires a central core of homology in the junction. The consensus cleavage sequence is 5'-(A/T)TT(C/G)-3'. Cleavage occurs on the 3'-side of the TT dinucleotide at the point of strand exchange. HJ branch migration catalyzed by RuvA-RuvB allows RuvC to scan DNA until it finds its consensus sequence, where it cleaves and resolves the cruciform DNA. The polypeptide is Crossover junction endodeoxyribonuclease RuvC (Shewanella amazonensis (strain ATCC BAA-1098 / SB2B)).